Here is a 1538-residue protein sequence, read N- to C-terminus: Ferredoxin-dependent glutamate synthase (1538 aa).

Cys-34 serves as the catalytic For GATase activity. A Glutamine amidotransferase type-2 domain is found at 34-431 (CGVGFIADVN…PGQMISVDIF (398 aa)). 1109–1166 (LSEVHQLLAENQLRDRVTLRVDGGLRTGSDIVLAAIMGAEEFGFGTVAMIATGCIMAR) is a binding site for FMN. Residues Cys-1162, Cys-1168, and Cys-1173 each coordinate [3Fe-4S] cluster.

Belongs to the glutamate synthase family. In terms of assembly, monomer. [3Fe-4S] cluster is required as a cofactor. Requires FAD as cofactor. The cofactor is FMN.

The protein localises to the plastid. The protein resides in the chloroplast stroma. The catalysed reaction is 2 oxidized [2Fe-2S]-[ferredoxin] + 2 L-glutamate = L-glutamine + 2 reduced [2Fe-2S]-[ferredoxin] + 2-oxoglutarate + 2 H(+). It functions in the pathway amino-acid biosynthesis; L-glutamate biosynthesis via GLT pathway; L-glutamate from 2-oxoglutarate and L-glutamine (ferredoxin route): step 1/1. It participates in energy metabolism; nitrogen metabolism. The protein is Ferredoxin-dependent glutamate synthase (gltB) of Pyropia yezoensis (Susabi-nori).